The following is a 304-amino-acid chain: Ribosomal RNA small subunit methyltransferase H (304 aa).

Residues 37 to 39, aspartate 57, phenylalanine 79, aspartate 100, and histidine 107 each bind S-adenosyl-L-methionine; that span reads GGH.

This sequence belongs to the methyltransferase superfamily. RsmH family.

Its subcellular location is the cytoplasm. It catalyses the reaction cytidine(1402) in 16S rRNA + S-adenosyl-L-methionine = N(4)-methylcytidine(1402) in 16S rRNA + S-adenosyl-L-homocysteine + H(+). Functionally, specifically methylates the N4 position of cytidine in position 1402 (C1402) of 16S rRNA. This chain is Ribosomal RNA small subunit methyltransferase H, found in Bacteroides fragilis (strain YCH46).